The sequence spans 359 residues: 4-hydroxy-3-methylbut-2-en-1-yl diphosphate synthase (flavodoxin) (359 aa).

Residues cysteine 265, cysteine 268, cysteine 300, and glutamate 307 each coordinate [4Fe-4S] cluster.

It belongs to the IspG family. [4Fe-4S] cluster serves as cofactor.

It catalyses the reaction (2E)-4-hydroxy-3-methylbut-2-enyl diphosphate + oxidized [flavodoxin] + H2O + 2 H(+) = 2-C-methyl-D-erythritol 2,4-cyclic diphosphate + reduced [flavodoxin]. It participates in isoprenoid biosynthesis; isopentenyl diphosphate biosynthesis via DXP pathway; isopentenyl diphosphate from 1-deoxy-D-xylulose 5-phosphate: step 5/6. Converts 2C-methyl-D-erythritol 2,4-cyclodiphosphate (ME-2,4cPP) into 1-hydroxy-2-methyl-2-(E)-butenyl 4-diphosphate. The sequence is that of 4-hydroxy-3-methylbut-2-en-1-yl diphosphate synthase (flavodoxin) from Lawsonia intracellularis (strain PHE/MN1-00).